Consider the following 329-residue polypeptide: 4-hydroxythreonine-4-phosphate dehydrogenase (329 aa).

Substrate contacts are provided by histidine 136 and threonine 137. The a divalent metal cation site is built by histidine 166, histidine 211, and histidine 266. The substrate site is built by lysine 274, asparagine 283, and arginine 292.

It belongs to the PdxA family. Homodimer. Zn(2+) is required as a cofactor. Requires Mg(2+) as cofactor. Co(2+) serves as cofactor.

It is found in the cytoplasm. The enzyme catalyses 4-(phosphooxy)-L-threonine + NAD(+) = 3-amino-2-oxopropyl phosphate + CO2 + NADH. Its pathway is cofactor biosynthesis; pyridoxine 5'-phosphate biosynthesis; pyridoxine 5'-phosphate from D-erythrose 4-phosphate: step 4/5. In terms of biological role, catalyzes the NAD(P)-dependent oxidation of 4-(phosphooxy)-L-threonine (HTP) into 2-amino-3-oxo-4-(phosphooxy)butyric acid which spontaneously decarboxylates to form 3-amino-2-oxopropyl phosphate (AHAP). The polypeptide is 4-hydroxythreonine-4-phosphate dehydrogenase (Shigella flexneri serotype 5b (strain 8401)).